The chain runs to 593 residues: Bifunctional purine biosynthesis protein ATIC (593 aa).

Residues 1–147 (MAARQQLALL…KNHARVTVVC (147 aa)) enclose the MGS-like domain. Residues 1-199 (MAARQQLALL…ISDYFRKEYS (199 aa)) are IMP cyclohydrolase. IMP is bound by residues 13-15 (SEK), 35-38 (SGGT), 65-68 (RVKT), 102-103 (CN), and 126-127 (DI). Lys-138 functions as the Proton donor/acceptor; for FAICAR cyclization activity in the catalytic mechanism. Lys-200 is modified (N6-acetyllysine). Residues 200-593 (KGVSQLPLRY…IHTNLRLFHH (394 aa)) form an AICAR formyltransferase region. Residues 208–209 (RY), His-268, Gly-317, Asp-340, Asn-432, and Arg-452 each bind 5-amino-1-(5-phospho-beta-D-ribosyl)imidazole-4-carboxamide. The active-site Proton acceptor; for AICAR formyltransferase activity is the His-268. (6R)-10-formyltetrahydrofolate is bound at residue Ile-453. Phe-542 is a binding site for 5-amino-1-(5-phospho-beta-D-ribosyl)imidazole-4-carboxamide. (6R)-10-formyltetrahydrofolate is bound by residues Asp-547 and 566-567 (SA). Arg-589 lines the 5-amino-1-(5-phospho-beta-D-ribosyl)imidazole-4-carboxamide pocket.

Belongs to the PurH family. In terms of assembly, homodimer. Associates with internalized INSR complexes on Golgi/endosomal membranes. Interacts with INSR; ATIC together with PRKAA2/AMPK2 and HACD3/PTPLAD1 is proposed to be part of a signaling network regulating INSR autophosphorylation and endocytosis.

It localises to the cytoplasm. The protein resides in the cytosol. It catalyses the reaction (6R)-10-formyltetrahydrofolate + 5-amino-1-(5-phospho-beta-D-ribosyl)imidazole-4-carboxamide = 5-formamido-1-(5-phospho-D-ribosyl)imidazole-4-carboxamide + (6S)-5,6,7,8-tetrahydrofolate. It carries out the reaction 10-formyldihydrofolate + 5-amino-1-(5-phospho-beta-D-ribosyl)imidazole-4-carboxamide = 5-formamido-1-(5-phospho-D-ribosyl)imidazole-4-carboxamide + 7,8-dihydrofolate. The catalysed reaction is IMP + H2O = 5-formamido-1-(5-phospho-D-ribosyl)imidazole-4-carboxamide. It functions in the pathway purine metabolism; IMP biosynthesis via de novo pathway; 5-formamido-1-(5-phospho-D-ribosyl)imidazole-4-carboxamide from 5-amino-1-(5-phospho-D-ribosyl)imidazole-4-carboxamide (10-formyl THF route): step 1/1. The protein operates within purine metabolism; IMP biosynthesis via de novo pathway; IMP from 5-formamido-1-(5-phospho-D-ribosyl)imidazole-4-carboxamide: step 1/1. Its activity is regulated as follows. AMP and XMP inhibit AICAR formyltransferase activity. AICAR formyltransferase activity is competitively inhibited by 2-[5-hydroxy-3-methyl-1-(2-methyl-4-sulfo-phenyl)-1H-pyrazol-4-ylazo]-4-sulfo-benzoic acid (326203-A). FAICAR cyclization is competitively inhibited by 1,5-dihydroimidazo[4,5-c][1,2,6]thiadiazin-4(3H)-one-2,2-dioxide and the corresponding nucleoside and nucleoside monophosphate. In terms of biological role, bifunctional enzyme that catalyzes the last two steps of purine biosynthesis. Acts as a transformylase that incorporates a formyl group to the AMP analog AICAR (5-amino-1-(5-phospho-beta-D-ribosyl)imidazole-4-carboxamide) to produce the intermediate formyl-AICAR (FAICAR). Can use both 10-formyldihydrofolate and 10-formyltetrahydrofolate as the formyl donor in this reaction. Also catalyzes the cyclization of FAICAR to inosine monophosphate (IMP). Promotes insulin receptor/INSR autophosphorylation and is involved in INSR internalization. This is Bifunctional purine biosynthesis protein ATIC (ATIC) from Gallus gallus (Chicken).